Reading from the N-terminus, the 57-residue chain is Potassium channel toxin alpha-KTx 4.2 (57 aa).

An N-terminal signal peptide occupies residues 1–20 (MKVLYGILIIFILCSMFYLS). The propeptide at 21 to 22 (QE) is removed by a carboxypeptidase. Disulfide bonds link C29–C50, C35–C55, and C39–C57.

Belongs to the short scorpion toxin superfamily. Potassium channel inhibitor family. Alpha-KTx 04 subfamily. Expressed by the venom gland.

The protein resides in the secreted. Functionally, blocker for small-conductance calcium-activated potassium channels KCa2.2/KCNN2 (Kd=80 nM) and KCa2.3/KCNN3 (Kd=197 nM) and ERG1/Kv11.1/KCNH2 potassium channels (53% inhibition at 5 uM). Has also been shown to inhibit Kv1.1/KCNA1 and Nav1.7/SCN9A with a moderate potency, as well as Kv11.1/KCNH2/ERG1 and Kv1.2/KCNA2 with a low potency. The polypeptide is Potassium channel toxin alpha-KTx 4.2 (Tityus serrulatus (Brazilian scorpion)).